A 101-amino-acid chain; its full sequence is Urease subunit beta (101 aa).

It belongs to the urease beta subunit family. As to quaternary structure, heterotrimer of UreA (gamma), UreB (beta) and UreC (alpha) subunits. Three heterotrimers associate to form the active enzyme.

It is found in the cytoplasm. It catalyses the reaction urea + 2 H2O + H(+) = hydrogencarbonate + 2 NH4(+). Its pathway is nitrogen metabolism; urea degradation; CO(2) and NH(3) from urea (urease route): step 1/1. In Sinorhizobium fredii (strain NBRC 101917 / NGR234), this protein is Urease subunit beta.